A 980-amino-acid chain; its full sequence is Putative formate dehydrogenase YrhE (980 aa).

Residues 5 to 81 (KSISVRVDGT…GMSIDLSGNR (77 aa)) enclose the 2Fe-2S ferredoxin-type domain. The [2Fe-2S] cluster site is built by Cys-39, Cys-50, Cys-53, and Cys-65. Residues 81–121 (RVKEAQTEAMDRLLENHLLYCTVCDNNNGNCTLHNTAEMMG) form the 4Fe-4S His(Cys)3-ligated-type domain. Residues His-97, Cys-101, Cys-104, Cys-111, Cys-153, Cys-156, Cys-159, Cys-163, Cys-196, Cys-199, Cys-202, Cys-206, Cys-270, Cys-273, Cys-277, and Cys-305 each contribute to the [4Fe-4S] cluster site. 2 consecutive 4Fe-4S ferredoxin-type domains span residues 144-171 (PFYR…VNET) and 187-216 (EGVP…EKSM). Residues 258-980 (MRETRTKKTK…NRPGYVHLTD (723 aa)) are formate dehydrogenase. Residues 263–319 (TKKTKTVCTFCGVGCSFEVWTKGRDILKIQPVSDAPVNAISTCVKGKFGWDFVNSKE) enclose the 4Fe-4S Mo/W bis-MGD-type domain. The interval 944–980 (ETAPLPKTNPRNKKRHPQNGVEAERKWNRPGYVHLTD) is disordered.

The protein in the C-terminal section; belongs to the prokaryotic molybdopterin-containing oxidoreductase family. It depends on [2Fe-2S] cluster as a cofactor. [4Fe-4S] cluster is required as a cofactor. Requires Mo-bis(molybdopterin guanine dinucleotide) as cofactor.

The enzyme catalyses formate + NAD(+) = CO2 + NADH. This chain is Putative formate dehydrogenase YrhE (yrhE), found in Bacillus subtilis (strain 168).